We begin with the raw amino-acid sequence, 37 residues long: Large ribosomal subunit protein bL36c (37 aa).

The protein belongs to the bacterial ribosomal protein bL36 family.

The protein localises to the plastid. It localises to the chloroplast. The sequence is that of Large ribosomal subunit protein bL36c from Lotus japonicus (Lotus corniculatus var. japonicus).